Here is a 242-residue protein sequence, read N- to C-terminus: Tryptophan synthase alpha chain (242 aa).

Active-site proton acceptor residues include Glu31 and Asp42.

The protein belongs to the TrpA family. As to quaternary structure, tetramer of two alpha and two beta chains.

The catalysed reaction is (1S,2R)-1-C-(indol-3-yl)glycerol 3-phosphate + L-serine = D-glyceraldehyde 3-phosphate + L-tryptophan + H2O. The protein operates within amino-acid biosynthesis; L-tryptophan biosynthesis; L-tryptophan from chorismate: step 5/5. Its function is as follows. The alpha subunit is responsible for the aldol cleavage of indoleglycerol phosphate to indole and glyceraldehyde 3-phosphate. In Staphylococcus aureus (strain MRSA252), this protein is Tryptophan synthase alpha chain.